Here is a 447-residue protein sequence, read N- to C-terminus: MKLGVFVYRLYRALTYGVSPLIHLHIRWRRLRGLEHFSRWPERFGHPSAVRPPGSLIWFHAVSLGEGMAAIPVIRHCNEVKSDLTILMTTTTVSAFEVIKNQLPVGVLHQFAPLDTPLAIDRFLGHWKPNAIIIMENELWPNLIMAASGLLIPLGLLNARMSTKSFKRWSSPLLLPLVSLLLSKFSLIAPLSTLQGIRFQLLHAPPFVINYSGDLKYVVNKFHVSSGTSESIRDLKVELAEMKVWIASSLHRGEEEVILGVHNMLLESHPDSVVIIVPRHPHHGQQIAHKLRKDGQSVALRSQNEKLTPRKTNIYVVDTLGELRELYSVAPIAVIGGSFIPGLTGHNLSEAAAAGCAVITGCHVGHFSHMVKAMQQANPLSVTQVSTKLELKEAVDLLLSNPEILETHQRASKDVYESLSSCIITNIWKLLNLHIFRGKSRNHIECK.

A mitochondrion-targeting transit peptide spans 1 to 32 (MKLGVFVYRLYRALTYGVSPLIHLHIRWRRLR). The active-site Proton acceptor is the Glu66. CMP is bound by residues 278-279 (PR), 320-322 (LGE), and 347-350 (NLSE).

It belongs to the glycosyltransferase group 1 family. Glycosyltransferase 30 subfamily. Expressed in leaves, stems and flowers.

It is found in the mitochondrion. The catalysed reaction is lipid IVA (E. coli) + CMP-3-deoxy-beta-D-manno-octulosonate = alpha-Kdo-(2-&gt;6)-lipid IVA (E. coli) + CMP + H(+). The enzyme catalyses alpha-Kdo-(2-&gt;6)-lipid IVA (E. coli) + CMP-3-deoxy-beta-D-manno-octulosonate = alpha-Kdo-(2-&gt;4)-alpha-Kdo-(2-&gt;6)-lipid IVA (E. coli) + CMP + H(+). It participates in glycolipid biosynthesis; KDO(2)-lipid A biosynthesis; KDO(2)-lipid A from CMP-3-deoxy-D-manno-octulosonate and lipid IV(A): step 1/4. It functions in the pathway glycolipid biosynthesis; KDO(2)-lipid A biosynthesis; KDO(2)-lipid A from CMP-3-deoxy-D-manno-octulosonate and lipid IV(A): step 2/4. Involved in the biosynthesis of lipid A, a phosphorylated glycolipid that in bacteria anchors the lipopolysaccharide to the outer membrane of the cell. Catalyzes the transfer of two 3-deoxy-D-manno-octulosonate (Kdo) residues from CMP-Kdo to lipid IV(A), the tetraacyldisaccharide-1,4'-bisphosphate precursor of lipid A. Lipid A-like molecules in plants may serve as structural components of the outer membranes of mitochondria and/or chloroplasts, or may be involved in signal transduction or plant defense responses. The polypeptide is Probable 3-deoxy-D-manno-octulosonic acid transferase, mitochondrial (KDTA) (Arabidopsis thaliana (Mouse-ear cress)).